Consider the following 494-residue polypeptide: Subtilisin-like serine protease EN45_078720 (494 aa).

An N-terminal signal peptide occupies residues 1 to 16; that stretch reads MKGFLSLTLLPLLVAA. A propeptide spans 17–136 (removed in mature form); it reads SPVAVNSIHN…IEKDSEVRTM (120 aa). An Inhibitor I9 domain is found at 43 to 136; sequence SYIVVFKKHV…IEKDSEVRTM (94 aa). The region spanning 146-448 is the Peptidase S8 domain; that stretch reads PWGLARISHR…GGSANYTKIL (303 aa). IgE-binding stretches follow at residues 180–198 and 209–231; these read VIDT…RANW and EDGN…GVAK. Residues Asp182 and His214 each act as charge relay system in the active site. Residues Asn244 and Asn280 are each glycosylated (N-linked (GlcNAc...) asparagine). Ser376 acts as the Charge relay system in catalysis. Asn443 carries an N-linked (GlcNAc...) asparagine glycan. A propeptide spans 454 to 494 (removed in mature form); sequence KAHNAETTVEDRIGGIIDSAEKAFHKELGAIYSEIKDAVSA.

It belongs to the peptidase S8 family.

Serine protease. The protein is Subtilisin-like serine protease EN45_078720 of Penicillium chrysogenum (Penicillium notatum).